A 202-amino-acid polypeptide reads, in one-letter code: Probable cobalt-precorrin-6B C(15)-methyltransferase (decarboxylating) (202 aa).

S-adenosyl-L-methionine-binding positions include Thr29, 53-57 (GCGSG), Asp77, and Val106.

This sequence belongs to the methyltransferase superfamily. Archaeal-type CbiT family.

It catalyses the reaction Co-precorrin-6B + S-adenosyl-L-methionine = Co-precorrin-7 + S-adenosyl-L-homocysteine + CO2. It participates in cofactor biosynthesis; adenosylcobalamin biosynthesis; cob(II)yrinate a,c-diamide from sirohydrochlorin (anaerobic route): step 8/10. Its function is as follows. Catalyzes the methylation of C-15 in cobalt-precorrin-6B followed by the decarboxylation of C-12 to form cobalt-precorrin-7. The protein is Probable cobalt-precorrin-6B C(15)-methyltransferase (decarboxylating) of Thermoplasma acidophilum (strain ATCC 25905 / DSM 1728 / JCM 9062 / NBRC 15155 / AMRC-C165).